We begin with the raw amino-acid sequence, 322 residues long: Phosphatidylserine decarboxylase proenzyme (322 aa).

Residues D90, H147, and S254 each act as charge relay system; for autoendoproteolytic cleavage activity in the active site. The active-site Schiff-base intermediate with substrate; via pyruvic acid; for decarboxylase activity is S254. S254 is modified (pyruvic acid (Ser); by autocatalysis). A disordered region spans residues 293-322; that stretch reads PDAEPAPLPAEEIEAEHDASPLIDDKKDQV. Over residues 308–322 the composition is skewed to basic and acidic residues; it reads EHDASPLIDDKKDQV.

Belongs to the phosphatidylserine decarboxylase family. PSD-B subfamily. Prokaryotic type I sub-subfamily. As to quaternary structure, heterodimer of a large membrane-associated beta subunit and a small pyruvoyl-containing alpha subunit. The cofactor is pyruvate. Post-translationally, is synthesized initially as an inactive proenzyme. Formation of the active enzyme involves a self-maturation process in which the active site pyruvoyl group is generated from an internal serine residue via an autocatalytic post-translational modification. Two non-identical subunits are generated from the proenzyme in this reaction, and the pyruvate is formed at the N-terminus of the alpha chain, which is derived from the carboxyl end of the proenzyme. The autoendoproteolytic cleavage occurs by a canonical serine protease mechanism, in which the side chain hydroxyl group of the serine supplies its oxygen atom to form the C-terminus of the beta chain, while the remainder of the serine residue undergoes an oxidative deamination to produce ammonia and the pyruvoyl prosthetic group on the alpha chain. During this reaction, the Ser that is part of the protease active site of the proenzyme becomes the pyruvoyl prosthetic group, which constitutes an essential element of the active site of the mature decarboxylase.

It is found in the cell membrane. The catalysed reaction is a 1,2-diacyl-sn-glycero-3-phospho-L-serine + H(+) = a 1,2-diacyl-sn-glycero-3-phosphoethanolamine + CO2. The protein operates within phospholipid metabolism; phosphatidylethanolamine biosynthesis; phosphatidylethanolamine from CDP-diacylglycerol: step 2/2. Its function is as follows. Catalyzes the formation of phosphatidylethanolamine (PtdEtn) from phosphatidylserine (PtdSer). In Escherichia coli O127:H6 (strain E2348/69 / EPEC), this protein is Phosphatidylserine decarboxylase proenzyme.